Consider the following 598-residue polypeptide: Elongation factor 4 (598 aa).

The tr-type G domain maps to 2-184 (KNIRNFSIIA…EIVAKIPAPE (183 aa)). GTP contacts are provided by residues 14 to 19 (DHGKST) and 131 to 134 (NKID).

This sequence belongs to the TRAFAC class translation factor GTPase superfamily. Classic translation factor GTPase family. LepA subfamily.

The protein localises to the cell inner membrane. It carries out the reaction GTP + H2O = GDP + phosphate + H(+). Functionally, required for accurate and efficient protein synthesis under certain stress conditions. May act as a fidelity factor of the translation reaction, by catalyzing a one-codon backward translocation of tRNAs on improperly translocated ribosomes. Back-translocation proceeds from a post-translocation (POST) complex to a pre-translocation (PRE) complex, thus giving elongation factor G a second chance to translocate the tRNAs correctly. Binds to ribosomes in a GTP-dependent manner. The sequence is that of Elongation factor 4 from Haemophilus influenzae (strain ATCC 51907 / DSM 11121 / KW20 / Rd).